The chain runs to 71 residues: MKLSKKKMQRIDNTLEKLFEWSHLNGYDNWLTNQLALEKEIEQGYRCETCKLVIKSVNKDEIVCKCINEKR.

This is an uncharacterized protein from Spiroplasma virus 4 (SpV4).